Consider the following 25-residue polypeptide: Caerin-1.7 (25 aa).

Leu25 bears the Leucine amide mark.

It belongs to the frog skin active peptide (FSAP) family. Caerin subfamily. Post-translationally, caerin-1.7.1 does not have any antibacterial activity. In terms of tissue distribution, expressed by the skin dorsal glands.

Its subcellular location is the secreted. In terms of biological role, antibacterial peptide, that adopts an alpha helical conformation which can disrupt bacterial membranes. Each caerin displays a different antimicrobial specificity. This Ranoidea xanthomera (Northern orange-eyed tree frog) protein is Caerin-1.7.